We begin with the raw amino-acid sequence, 417 residues long: Tyrosine--tRNA ligase (417 aa).

Tyrosine 34 contributes to the L-tyrosine binding site. Positions 39-48 match the 'HIGH' region motif; that stretch reads PTAKSIHIGN. L-tyrosine contacts are provided by tyrosine 165 and glutamine 169. A 'KMSKS' region motif is present at residues 227 to 231; sequence KFGKS. Lysine 230 is a binding site for ATP. Positions 349-416 constitute an S4 RNA-binding domain; it reads TDVVELLVKD…GKKKYFLAKV (68 aa).

Belongs to the class-I aminoacyl-tRNA synthetase family. TyrS type 1 subfamily. As to quaternary structure, homodimer.

Its subcellular location is the cytoplasm. The enzyme catalyses tRNA(Tyr) + L-tyrosine + ATP = L-tyrosyl-tRNA(Tyr) + AMP + diphosphate + H(+). In terms of biological role, catalyzes the attachment of tyrosine to tRNA(Tyr) in a two-step reaction: tyrosine is first activated by ATP to form Tyr-AMP and then transferred to the acceptor end of tRNA(Tyr). The protein is Tyrosine--tRNA ligase of Oenococcus oeni (strain ATCC BAA-331 / PSU-1).